Here is a 497-residue protein sequence, read N- to C-terminus: MEKKYILALDQGTTSSRAMIIDEEGEVIGVAQEEFDQIFPKPGWVEHSANEIWASILAVIAGVLLKTNISSKEIAGIGITNQRETTVIWDKESGNPIYNAIVWQSRQTEDICKQLRKDGYEDTIRSKTGLLIDPYFAGTKARWILDHVDGAQERAEKGELLFGTIDTWLVWKLTGGRAHITDYSNASRTLLYNIYDLEWDDELLKMLNIPRAMLPEVRPSSEVYADTVPYHFFGEEVPVAGIAGDQQAALFGQGCFEKGMAKNTYGTGCFLLMNTGEKAVRSENGLLTTLAWGIDGKVEYALEGSIFVAGSAIQWLRDGLRMVRQSSDSENYASRIESSDGVYVVPAFVGLGAPYWDSDVRGAVFGLTRGTEKEQFIRATLESLAYQTRDVLYAMEQDSGISLKTLRVDGGASANNFLMQFQSDILGVPVERPENKETTVLGAAFLAGLAVGVWKDKNEIKKHWKLDKRFEVEMKEEQREDLYDGWHKAVKAAQAFK.

Thr13 serves as a coordination point for ADP. The ATP site is built by Thr13, Thr14, and Ser15. Thr13 provides a ligand contact to sn-glycerol 3-phosphate. Residue Arg17 participates in ADP binding. Arg83, Glu84, and Tyr135 together coordinate sn-glycerol 3-phosphate. Residues Arg83, Glu84, and Tyr135 each contribute to the glycerol site. At His231 the chain carries Phosphohistidine; by HPr. Asp245 serves as a coordination point for sn-glycerol 3-phosphate. The glycerol site is built by Asp245 and Gln246. Positions 267 and 310 each coordinate ADP. The ATP site is built by Thr267, Gly310, Gln314, and Gly411. Gly411 and Asn415 together coordinate ADP.

This sequence belongs to the FGGY kinase family. In terms of assembly, homotetramer and homodimer (in equilibrium). In terms of processing, the phosphoenolpyruvate-dependent sugar phosphotransferase system (PTS), including enzyme I, and histidine-containing protein (HPr) are required for the phosphorylation, which leads to the activation of the enzyme.

It carries out the reaction glycerol + ATP = sn-glycerol 3-phosphate + ADP + H(+). It participates in polyol metabolism; glycerol degradation via glycerol kinase pathway; sn-glycerol 3-phosphate from glycerol: step 1/1. With respect to regulation, activated by phosphorylation and inhibited by fructose 1,6-bisphosphate (FBP). In terms of biological role, key enzyme in the regulation of glycerol uptake and metabolism. Catalyzes the phosphorylation of glycerol to yield sn-glycerol 3-phosphate. The protein is Glycerol kinase of Listeria welshimeri serovar 6b (strain ATCC 35897 / DSM 20650 / CCUG 15529 / CIP 8149 / NCTC 11857 / SLCC 5334 / V8).